Here is a 333-residue protein sequence, read N- to C-terminus: Probable ABC transporter permease protein y4mJ (333 aa).

Helical transmembrane passes span 30-50 (LAIA…VPQA), 62-82 (AGAP…TGGI), 84-104 (LSVG…MASG), 110-130 (ALIG…LVTV), 133-153 (LAPF…AFIV), 175-195 (IPGV…IEIF), 228-248 (FAYV…ISYI), 253-273 (STAG…GGAS), 274-294 (LLGG…ITVI), and 300-320 (LIGI…LIAV).

This sequence belongs to the binding-protein-dependent transport system permease family. AraH/RbsC subfamily.

Its subcellular location is the cell inner membrane. Functionally, probably part of the binding-protein-dependent transport system y4mIJK. This system probably transports a sugar. Probably responsible for the translocation of the substrate across the membrane. The polypeptide is Probable ABC transporter permease protein y4mJ (Sinorhizobium fredii (strain NBRC 101917 / NGR234)).